The chain runs to 171 residues: ASQKRPSQRHGSKYLASASTMDHARHGFLPRHRDTGIDSLGRFFGADRGAPKRGSGKDGHHAARTTHYGSLPQKAQHGRPQDENPVVHFFKNIVTPRTPPPSQGKGRGLSLSRFSWGAEGQKPGFGYGGRAPDYKPAHKGLKGAQDAQGTLSKIFKLGGRDSRSGSPMARR.

Ala-1 is modified (N-acetylalanine). Residues 1–12 (ASQKRPSQRHGS) show a composition bias toward basic residues. The tract at residues 1 to 171 (ASQKRPSQRH…SRSGSPMARR (171 aa)) is disordered. Phosphoserine is present on residues Ser-7 and Ser-12. Tyr-14 is modified (phosphotyrosine). Residue Ser-19 is modified to Phosphoserine. Position 20 is a phosphothreonine (Thr-20). Arg-25 and Arg-31 each carry citrulline. Position 35 is a phosphothreonine (Thr-35). The residue at position 39 (Ser-39) is a Phosphoserine. Omega-N-methylarginine is present on residues Arg-42 and Arg-48. A Phosphoserine modification is found at Ser-55. The residue at position 66 (Thr-66) is a Phosphothreonine. Tyr-68 is subject to Phosphotyrosine. 2 positions are modified to phosphothreonine: Thr-95 and Thr-98. At Gln-103 the chain carries Deamidated glutamine. Arg-107 bears the Omega-N-methylarginine; alternate mark. A Symmetric dimethylarginine; alternate modification is found at Arg-107. Ser-115 carries the phosphoserine modification. N6-acetyllysine is present on Lys-122. Position 130 is a citrulline (Arg-130). A Deamidated glutamine modification is found at Gln-148. Citrulline is present on Arg-160. At Ser-162 the chain carries Phosphoserine. Ser-166 carries the phosphoserine; by UHMK1 modification. Arg-171 carries the citrulline modification.

The protein belongs to the myelin basic protein family. As to quaternary structure, homodimer. In terms of processing, as in other animals, several charge isomers may be produced as a result of optional post-translational modifications, such as phosphorylation of serine or threonine residues, deamidation of glutamine or asparagine residues, citrullination and methylation of arginine residues. Post-translationally, phosphorylated by TAOK2, VRK2, MAPK11, MAPK12, MAPK14 and MINK1. Proteolytically cleaved in B cell lysosomes by cathepsin CTSG which degrades the major immunogenic MBP epitope and prevents the activation of MBP-specific autoreactive T cells.

It localises to the myelin membrane. Functionally, is, with PLP, the most abundant protein component of the myelin membrane in the CNS. Has a role in both the formation and stabilization of this compact multilayer arrangement of bilayers. Each splice variant and charge isomer may have a specialized function in the assembly of an optimized, biochemically functional myelin membrane. The sequence is that of Myelin basic protein (MBP) from Sus scrofa (Pig).